The primary structure comprises 470 residues: Ribulose bisphosphate carboxylase large chain (470 aa).

Positions 115 and 165 each coordinate substrate. Lys167 (proton acceptor) is an active-site residue. Lys169 serves as a coordination point for substrate. Mg(2+) contacts are provided by Lys193, Asp195, and Glu196. An N6-carboxylysine modification is found at Lys193. The active-site Proton acceptor is the His286. Residues Arg287, His319, and Ser371 each coordinate substrate.

This sequence belongs to the RuBisCO large chain family. Type I subfamily. Heterohexadecamer of 8 large chains and 8 small chains. Requires Mg(2+) as cofactor.

Its subcellular location is the carboxysome. It carries out the reaction 2 (2R)-3-phosphoglycerate + 2 H(+) = D-ribulose 1,5-bisphosphate + CO2 + H2O. It catalyses the reaction D-ribulose 1,5-bisphosphate + O2 = 2-phosphoglycolate + (2R)-3-phosphoglycerate + 2 H(+). Functionally, ruBisCO catalyzes two reactions: the carboxylation of D-ribulose 1,5-bisphosphate, the primary event in carbon dioxide fixation, as well as the oxidative fragmentation of the pentose substrate in the photorespiration process. Both reactions occur simultaneously and in competition at the same active site. This is Ribulose bisphosphate carboxylase large chain from Prochlorococcus marinus (strain MIT 9303).